We begin with the raw amino-acid sequence, 473 residues long: MQPFVLYNSEQRKKVEFVPRKEGHIDMYVCGMTVYDYCHIGHARVMVAFDYIIRFLRSQGWKVRYIRNITDIDDKIIKRANENGETIQQLTTRFIDAMNEDAANLGCLAPDEAPKATEYIDQMQNMIGNLVNKGAAYPASNGDVYFEVTKFEKYGRLSGRKLEDMQAGASERVDVEVEKKHPFDFVLWKHAKENEPSWASPWGNGRPGWHIECSAMSTCCLGNHFDIHGGGSDLMFPHHENEIAQSEASTGEQYVNYWMHVGFINVDGEKMSKSLGNFFTIRDVMEKFHPEVIRYFIVSSHYRSPVNFSDVALKEAKTSLTRFYHSFKAYQQVYGQTTTEALDQSFIERFNNAMCDDFNTAEAMAVLFELNKELNRAVKEEQADQATVLYSTLRHLTNILGLVQHNVDDFLKSDIGQDALALSDAEIEDFIQQRVDAKKAKDFAKADSIRQSLLEQGVVLEDTRQGTVWRRAD.

Cysteine 30 contributes to the Zn(2+) binding site. The 'HIGH' region motif lies at 32–42 (MTVYDYCHIGH). Zn(2+) is bound by residues cysteine 213, histidine 238, and glutamate 242. Residues 270 to 274 (KMSKS) carry the 'KMSKS' region motif. Residue lysine 273 participates in ATP binding.

The protein belongs to the class-I aminoacyl-tRNA synthetase family. As to quaternary structure, monomer. The cofactor is Zn(2+).

The protein localises to the cytoplasm. It carries out the reaction tRNA(Cys) + L-cysteine + ATP = L-cysteinyl-tRNA(Cys) + AMP + diphosphate. This Acinetobacter baumannii (strain ACICU) protein is Cysteine--tRNA ligase.